We begin with the raw amino-acid sequence, 175 residues long: Sec-independent protein translocase protein TatB (175 aa).

Residues 1-21 traverse the membrane as a helical segment; the sequence is MLDLGLSKMALIGVVALVVLG. A compositionally biased stretch (low complexity) spans 99-115; sequence GDPAAADASGGLGATSD. Residues 99–118 are disordered; sequence GDPAAADASGGLGATSDEPS.

It belongs to the TatB family. The Tat system comprises two distinct complexes: a TatABC complex, containing multiple copies of TatA, TatB and TatC subunits, and a separate TatA complex, containing only TatA subunits. Substrates initially bind to the TatABC complex, which probably triggers association of the separate TatA complex to form the active translocon.

The protein localises to the cell inner membrane. Functionally, part of the twin-arginine translocation (Tat) system that transports large folded proteins containing a characteristic twin-arginine motif in their signal peptide across membranes. Together with TatC, TatB is part of a receptor directly interacting with Tat signal peptides. TatB may form an oligomeric binding site that transiently accommodates folded Tat precursor proteins before their translocation. This is Sec-independent protein translocase protein TatB from Burkholderia thailandensis (strain ATCC 700388 / DSM 13276 / CCUG 48851 / CIP 106301 / E264).